A 338-amino-acid polypeptide reads, in one-letter code: UPF0324 membrane protein TauZ (338 aa).

9 consecutive transmembrane segments (helical) span residues 36 to 55, 75 to 92, 96 to 118, 125 to 147, 162 to 184, 223 to 245, 255 to 277, 290 to 309, and 314 to 336; these read YGAP…NFLA, LGVA…LAAL, AIAL…SRLV, ALLT…AAVL, LSVT…LFGF, LIRV…ARGL, PLLP…GLIP, WALL…GKML, and GAIA…GLHL.

This sequence belongs to the UPF0324 family.

Its subcellular location is the cell membrane. The polypeptide is UPF0324 membrane protein TauZ (tauZ) (Paracoccus pantotrophus (Thiosphaera pantotropha)).